A 354-amino-acid chain; its full sequence is Type II methylase M.HgiDII (354 aa).

The region spanning 3–344 is the SAM-dependent MTase C5-type domain; the sequence is GAVIDLFCGV…KSIKRFLEGL (342 aa). Cys79 is a catalytic residue.

The protein belongs to the class I-like SAM-binding methyltransferase superfamily. C5-methyltransferase family.

It catalyses the reaction a 2'-deoxycytidine in DNA + S-adenosyl-L-methionine = a 5-methyl-2'-deoxycytidine in DNA + S-adenosyl-L-homocysteine + H(+). Its function is as follows. A methylase that recognizes the double-stranded sequence 5'-GTCGAC-3', methylates C-? on both strands and protects the DNA from cleavage by the HgiDII endonuclease. The protein is Type II methylase M.HgiDII of Herpetosiphon aurantiacus (Herpetosiphon giganteus).